The primary structure comprises 2051 residues: Autophagy-related protein 2 (2051 aa).

In terms of domain architecture, Chorein N-terminal spans 31–121; sequence QALDLDNLNF…QDEQTAKNKK (91 aa). Positions 108-117 are enriched in basic and acidic residues; that stretch reads SKQEQDEQTA. 6 disordered regions span residues 108–129, 152–179, 297–331, 363–384, 419–466, and 501–564; these read SKQE…DGDE, RRLE…DDDG, SLVK…DMSI, DTQY…TPRA, RSEP…ADTE, and PGGW…DTST. Polar residues-rich tracts occupy residues 374-383 and 426-435; these read AGSSPLSTPR and PPTSFQPQTM. Positions 436–454 are enriched in low complexity; the sequence is PSGAVSPAPSEPSSSASSV.

Belongs to the ATG2 family.

It localises to the preautophagosomal structure membrane. It is found in the endoplasmic reticulum membrane. It catalyses the reaction a 1,2-diacyl-sn-glycero-3-phosphocholine(in) = a 1,2-diacyl-sn-glycero-3-phosphocholine(out). The enzyme catalyses a 1,2-diacyl-sn-glycero-3-phospho-L-serine(in) = a 1,2-diacyl-sn-glycero-3-phospho-L-serine(out). The catalysed reaction is a 1,2-diacyl-sn-glycero-3-phosphoethanolamine(in) = a 1,2-diacyl-sn-glycero-3-phosphoethanolamine(out). Its function is as follows. Lipid transfer protein required for autophagosome completion and peroxisome degradation. Tethers the edge of the isolation membrane (IM) to the endoplasmic reticulum (ER) and mediates direct lipid transfer from ER to IM for IM expansion. Atg-2 binds to the ER exit site (ERES), which is the membrane source for autophagosome formation, using basic residues in its N-terminal region (NR) and to the expanding edge of the IM through its C-terminal region. The latter binding is assisted by an atg-18-PtdIns3P interaction. Atg-2 then extracts phospholipids from the membrane source using its NR and transfers them to atg-9 to the IM through its predicted beta-sheet-rich structure for membrane expansion. The protein is Autophagy-related protein 2 (apg-2) of Neurospora crassa (strain ATCC 24698 / 74-OR23-1A / CBS 708.71 / DSM 1257 / FGSC 987).